A 403-amino-acid polypeptide reads, in one-letter code: MTTLDESLALIGRGAEEILKLDQLEARLTSGVPLRVKAGFDPTAPDLHLGHTVLLNKMRQFQQLGHQVIFLIGDFTGMIGDPSGKNATRKPLSREDVLANARTYEEQVFKILDRERTEVRFNSEWFGQMSAADMIKLSAQHTVARMLERDDFAKRFGSQQPIAIHEFLYPLVQGYDSVALRADVELGGTDQKFNLLMGRGLQEHYGQAPQIVLTMPLLEGLEGVAKMSKSLGNYIGINEPAIDIVTKTMKIGDELTWRWIDLLSLDISVAEAVRLKEQVTSGELHPREVKLRLARELATRFHDAATAEQAIAGWHAVVTGQGDTSLLPLQEVVVPAEGLRIASLLTAAGLTPSNSEATRKLKERAVKIDGEVLEDATRVFTQGFEGVIQVGKRNFARVSLVIG.

The 'HIGH' region motif lies at 42–51; sequence PTAPDLHLGH. Residues 226–230 carry the 'KMSKS' region motif; sequence KMSKS. Position 229 (Lys229) interacts with ATP. Positions 339–400 constitute an S4 RNA-binding domain; it reads LRIASLLTAA…GKRNFARVSL (62 aa).

It belongs to the class-I aminoacyl-tRNA synthetase family. TyrS type 2 subfamily. Homodimer.

The protein resides in the cytoplasm. The enzyme catalyses tRNA(Tyr) + L-tyrosine + ATP = L-tyrosyl-tRNA(Tyr) + AMP + diphosphate + H(+). Its function is as follows. Catalyzes the attachment of tyrosine to tRNA(Tyr) in a two-step reaction: tyrosine is first activated by ATP to form Tyr-AMP and then transferred to the acceptor end of tRNA(Tyr). The polypeptide is Tyrosine--tRNA ligase (Xanthomonas oryzae pv. oryzae (strain MAFF 311018)).